Here is a 224-residue protein sequence, read N- to C-terminus: MSKEIPTPYMWSYQPQTGHAAGASQDYSTQMNWFSAGPSMISQVYGIRDLRNKVLITQAEITKTPRTIMDPPIWPAAMLVQEAAPPKTVTLPRNHTLEQAMTNSGAQLAGGRQLCPSQIGIKSPVLAGTGIQLSEDIPSASWIRPDGIFQLGGGSRSSFSPTQAFLTLQQASSTPRAGGVGTYQFVREFVPEVYLNPFSGPPDTFPDQFIPNYDIVTNSVDGYD.

The residue at position 64 (threonine 64) is a Phosphothreonine; by host. Positions 112–154 (RQLCPSQIGIKSPVLAGTGIQLSEDIPSASWIRPDGIFQLGGG) are excised as a propeptide.

Belongs to the adenoviridae hexon-linking protein family. In terms of assembly, interacts with the peripentonal hexons as well as the hexons in the facets. Part of a complex composed of the core-capsid bridging protein, the endosome lysis protein VI and the hexon-linking protein VIII; these interactions bridge the virus core to the capsid. Cleaved by the viral protease during virion maturation. May cause the middle segment to be shed from the capsid.

Its subcellular location is the virion. The protein resides in the host nucleus. Functionally, structural component of the virion that acts as a cement protein on the capsid interior and which glue the peripentonal hexons and group-of-nine hexons together. This Canis lupus familiaris (Dog) protein is Pre-hexon-linking protein VIII.